Here is a 335-residue protein sequence, read N- to C-terminus: NADH-quinone oxidoreductase subunit H (335 aa).

The next 8 helical transmembrane spans lie at Val11–Leu31, Val81–Ile101, Ile114–Gly134, Val154–Phe174, Leu187–Val207, Phe238–Phe258, Gln270–Leu290, and Trp307–Trp327.

The protein belongs to the complex I subunit 1 family. In terms of assembly, NDH-1 is composed of 13 different subunits. Subunits NuoA, H, J, K, L, M, N constitute the membrane sector of the complex.

It localises to the cell inner membrane. The catalysed reaction is a quinone + NADH + 5 H(+)(in) = a quinol + NAD(+) + 4 H(+)(out). NDH-1 shuttles electrons from NADH, via FMN and iron-sulfur (Fe-S) centers, to quinones in the respiratory chain. The immediate electron acceptor for the enzyme in this species is believed to be ubiquinone. Couples the redox reaction to proton translocation (for every two electrons transferred, four hydrogen ions are translocated across the cytoplasmic membrane), and thus conserves the redox energy in a proton gradient. This subunit may bind ubiquinone. The sequence is that of NADH-quinone oxidoreductase subunit H from Pseudomonas fluorescens (strain ATCC BAA-477 / NRRL B-23932 / Pf-5).